The chain runs to 534 residues: CTP synthase (534 aa).

The interval 1-268 (MAAKYIFVTG…DQIVCDHLQL (268 aa)) is amidoligase domain. Ser14 is a binding site for CTP. Ser14 provides a ligand contact to UTP. Position 15 to 20 (15 to 20 (SLGKGI)) interacts with ATP. L-glutamine is bound at residue Tyr55. Asp72 contributes to the ATP binding site. Mg(2+) contacts are provided by Asp72 and Glu142. CTP-binding positions include 149 to 151 (DIE), 189 to 194 (KSKPTQ), and Lys225. UTP is bound by residues 189–194 (KSKPTQ) and Lys225. A Glutamine amidotransferase type-1 domain is found at 293–534 (RIAIVGKYVE…FVRNALAAQA (242 aa)). Gly355 provides a ligand contact to L-glutamine. Catalysis depends on Cys382, which acts as the Nucleophile; for glutamine hydrolysis. Residues 383-386 (LGMQ), Glu406, and Arg463 contribute to the L-glutamine site. Active-site residues include His508 and Glu510.

The protein belongs to the CTP synthase family. In terms of assembly, homotetramer.

It carries out the reaction UTP + L-glutamine + ATP + H2O = CTP + L-glutamate + ADP + phosphate + 2 H(+). It catalyses the reaction L-glutamine + H2O = L-glutamate + NH4(+). The enzyme catalyses UTP + NH4(+) + ATP = CTP + ADP + phosphate + 2 H(+). It functions in the pathway pyrimidine metabolism; CTP biosynthesis via de novo pathway; CTP from UDP: step 2/2. Its activity is regulated as follows. Allosterically activated by GTP, when glutamine is the substrate; GTP has no effect on the reaction when ammonia is the substrate. The allosteric effector GTP functions by stabilizing the protein conformation that binds the tetrahedral intermediate(s) formed during glutamine hydrolysis. Inhibited by the product CTP, via allosteric rather than competitive inhibition. In terms of biological role, catalyzes the ATP-dependent amination of UTP to CTP with either L-glutamine or ammonia as the source of nitrogen. Regulates intracellular CTP levels through interactions with the four ribonucleotide triphosphates. In Shouchella clausii (strain KSM-K16) (Alkalihalobacillus clausii), this protein is CTP synthase.